Consider the following 725-residue polypeptide: Protein ECM27 (725 aa).

The next 12 membrane-spanning stretches (helical) occupy residues 21–41 (VTFIVPSLFHIIIAFVLLGIC), 119–139 (VLGACGIILCIVEGSIFIIMS), 157–177 (LLFSLAAMCVMSYVSLMNQVT), 178–198 (VLNCLLMAFLYAFYLVVKLTF), 397–417 (ISDAIFSIITVPFFIIFKLSC), 439–459 (LPIILLFIQSITAPFLLCSIL), 470–490 (LVYLFPLILAMALILLLTAFI), 526–546 (IQIIFLAIGIINIIIWISLLA), 559–579 (ILGLSKAILGLTIFAWGNSVG), 621–641 (LNSMGGIGFSGLVSMLFIGAF), 668–688 (FIVSCVFIILQIILLLLFFGG), and 704–724 (GISMCGLWALATLINILLELF).

It belongs to the Ca(2+):cation antiporter (CaCA) (TC 2.A.19) family.

It is found in the membrane. The chain is Protein ECM27 (ECM27) from Saccharomyces cerevisiae (strain ATCC 204508 / S288c) (Baker's yeast).